The following is an 84-amino-acid chain: MTDIFANPDKTLDALGLRCPEPVMMVRKTVRHMEEGQTLLIIADDPATTRDIPGFCRFMDHQLLAQDTEQTPYRYLVRKGITAG.

The Cysteine persulfide intermediate role is filled by cysteine 19.

This sequence belongs to the sulfur carrier protein TusA family. In terms of assembly, interacts with IscS.

The protein localises to the cytoplasm. It participates in tRNA modification. In terms of biological role, sulfur carrier protein involved in sulfur trafficking in the cell. Part of a sulfur-relay system required for 2-thiolation during synthesis of 2-thiouridine of the modified wobble base 5-methylaminomethyl-2-thiouridine (mnm(5)s(2)U) in tRNA. Interacts with IscS and stimulates its cysteine desulfurase activity. Accepts an activated sulfur from IscS, which is then transferred to TusD, and thus determines the direction of sulfur flow from IscS to 2-thiouridine formation. Also appears to be involved in sulfur transfer for the biosynthesis of molybdopterin. This chain is Sulfur carrier protein TusA, found in Yersinia pseudotuberculosis serotype O:1b (strain IP 31758).